We begin with the raw amino-acid sequence, 172 residues long: Protein-export protein SecB (172 aa).

The segment at 1-22 is disordered; sequence MADETSADINNPALQPNGEDTS. Over residues 7–20 the composition is skewed to polar residues; it reads ADINNPALQPNGED.

The protein belongs to the SecB family. As to quaternary structure, homotetramer, a dimer of dimers. One homotetramer interacts with 1 SecA dimer.

It is found in the cytoplasm. One of the proteins required for the normal export of preproteins out of the cell cytoplasm. It is a molecular chaperone that binds to a subset of precursor proteins, maintaining them in a translocation-competent state. It also specifically binds to its receptor SecA. This Sphingopyxis alaskensis (strain DSM 13593 / LMG 18877 / RB2256) (Sphingomonas alaskensis) protein is Protein-export protein SecB.